We begin with the raw amino-acid sequence, 116 residues long: Protein lin-52 homolog (116 aa).

Phosphoserine is present on residues Ser28 and Ser53.

It belongs to the lin-52 family. As to quaternary structure, component of the DREAM complex (also named LINC complex) at least composed of E2F4, E2F5, LIN9, LIN37, LIN52, LIN54, MYBL1, MYBL2, RBL1, RBL2, RBBP4, TFDP1 and TFDP2. The complex exists in quiescent cells where it represses cell cycle-dependent genes. It dissociates in S phase when LIN9, LIN37, LIN52 and LIN54 form a subcomplex that binds to MYBL2.

In Homo sapiens (Human), this protein is Protein lin-52 homolog (LIN52).